The sequence spans 396 residues: GPN-loop GTPase 1 (396 aa).

Low complexity predominate over residues 1–13; it reads MSETTATSTTTTK. The segment at 1-30 is disordered; sequence MSETTATSTTTTKTTDKDNVNNNNNNENKE. 44–49 contacts GTP; it reads GSGKTT. Positions 101 to 103 match the Gly-Pro-Asn (GPN)-loop; involved in dimer interface motif; sequence GPN. Residue 204-207 coordinates GTP; sequence NKID. Positions 284-387 form a coiled coil; sequence YKADLEKIKK…ERLEDQRAYE (104 aa). Residues 325–342 show a composition bias toward basic and acidic residues; sequence DFKKEKKRENQEKTKNIY. Residues 325–396 form a disordered region; that stretch reads DFKKEKKREN…ESLMSSIKKI (72 aa). Positions 343-380 are enriched in acidic residues; sequence DDEEDDYRDDRDMEDSGEYESYEDEQEEGDYENEEERL.

Belongs to the GPN-loop GTPase family. Heterodimer with gpn3. Binds to RNA polymerase II (RNAPII).

The protein localises to the cytoplasm. It localises to the nucleus. Small GTPase required for proper nuclear import of RNA polymerase II (RNAPII). May act at an RNAP assembly step prior to nuclear import. This is GPN-loop GTPase 1 (gpn1) from Dictyostelium discoideum (Social amoeba).